Here is a 679-residue protein sequence, read N- to C-terminus: Protein polyglycylase TTLL10 (679 aa).

Residues M1 to R15 are compositionally biased toward basic residues. Disordered regions lie at residues M1–S33, G49–A77, and V96–S124. Polar residues predominate over residues S18–G30. Residues V96–H110 show a composition bias toward basic residues. The region spanning Q172–K543 is the TTL domain. Residues K304, Q310–G311, Q353–V356, K366–D368, and T409–N410 contribute to the ATP site. Q310 contributes to the a protein binding site. Mg(2+) is bound by residues D489, E502, and N504. The disordered stretch occupies residues D605–S679.

It depends on Mg(2+) as a cofactor.

The protein localises to the cytoplasm. It is found in the cytoskeleton. It localises to the cell projection. The protein resides in the cilium. Its subcellular location is the cilium axoneme. It catalyses the reaction (glycyl)(n)-glycyl-L-glutamyl-[protein] + glycine + ATP = (glycyl)(n+1)-glycyl-L-glutamyl-[protein] + ADP + phosphate + H(+). In terms of biological role, polyglycylase which modifies both tubulin and non-tubulin proteins, generating polyglycine side chains of variable lengths on the gamma-carboxyl groups of specific glutamate residues of target proteins. Involved in the elongation step rather than the initiation step of the polyglycylation reaction. Polyglycylates alpha-tubulin and beta-tubulin. Polyglycylates non-tubulin proteins such as nucleosome assembly protein NAP1. The chain is Protein polyglycylase TTLL10 from Rattus norvegicus (Rat).